Consider the following 106-residue polypeptide: Transcription initiation factor IIA subunit 2 (106 aa).

It belongs to the TFIIA subunit 2 family. TFIIA is a heterodimer of the large unprocessed subunit 1 and a small subunit gamma. It was originally believed to be a heterotrimer of an alpha, a beta and a gamma subunit.

It localises to the nucleus. Its function is as follows. TFIIA is a component of the transcription machinery of RNA polymerase II and plays an important role in transcriptional activation. TFIIA in a complex with TBP mediates transcriptional activity. The chain is Transcription initiation factor IIA subunit 2 (TFIIA-S) from Arabidopsis thaliana (Mouse-ear cress).